The sequence spans 426 residues: Dynein regulatory complex protein 10 (426 aa).

2 disordered regions span residues 18–37 (TRIG…LKPL) and 399–426 (SKKK…KGKK). The IQ domain maps to 377–406 (MVRAATLIQAFWKGYLVRSLLRSKKKRGKG). Basic residues predominate over residues 399 to 408 (SKKKRGKGKA). The span at 409–426 (KGKEKGKQKGKEKGKGKK) shows a compositional bias: basic and acidic residues.

The protein belongs to the DRC10 family. Component of the nexin-dynein regulatory complex (N-DRC). Interacts with CFAP52.

It localises to the cytoplasm. Its subcellular location is the cytoskeleton. The protein localises to the flagellum axoneme. Its function is as follows. Component of the nexin-dynein regulatory complex (N-DRC), a key regulator of ciliary/flagellar motility which maintains the alignment and integrity of the distal axoneme and regulates microtubule sliding in motile axonemes. The chain is Dynein regulatory complex protein 10 (IQCD) from Macaca fascicularis (Crab-eating macaque).